The chain runs to 364 residues: Probable dual-specificity RNA methyltransferase RlmN (364 aa).

Glu107 serves as the catalytic Proton acceptor. Residues 113–346 (HEYGNSVCVT…ATIRREQGAD (234 aa)) form the Radical SAM core domain. Cys120 and Cys351 form a disulfide bridge. Residues Cys127, Cys131, and Cys134 each contribute to the [4Fe-4S] cluster site. S-adenosyl-L-methionine is bound by residues 177-178 (GE), Ser209, 232-234 (SLH), and Asn308. Cys351 serves as the catalytic S-methylcysteine intermediate.

It belongs to the radical SAM superfamily. RlmN family. The cofactor is [4Fe-4S] cluster.

Its subcellular location is the cytoplasm. It carries out the reaction adenosine(2503) in 23S rRNA + 2 reduced [2Fe-2S]-[ferredoxin] + 2 S-adenosyl-L-methionine = 2-methyladenosine(2503) in 23S rRNA + 5'-deoxyadenosine + L-methionine + 2 oxidized [2Fe-2S]-[ferredoxin] + S-adenosyl-L-homocysteine. It catalyses the reaction adenosine(37) in tRNA + 2 reduced [2Fe-2S]-[ferredoxin] + 2 S-adenosyl-L-methionine = 2-methyladenosine(37) in tRNA + 5'-deoxyadenosine + L-methionine + 2 oxidized [2Fe-2S]-[ferredoxin] + S-adenosyl-L-homocysteine. Specifically methylates position 2 of adenine 2503 in 23S rRNA and position 2 of adenine 37 in tRNAs. Confers resistance to some classes of antibiotics. The polypeptide is Probable dual-specificity RNA methyltransferase RlmN (Staphylococcus saprophyticus subsp. saprophyticus (strain ATCC 15305 / DSM 20229 / NCIMB 8711 / NCTC 7292 / S-41)).